We begin with the raw amino-acid sequence, 514 residues long: Protein nucleotidyltransferase YdiU (514 aa).

Residues G111, G113, R114, K134, D146, G147, R197, and R204 each coordinate ATP. D276 (proton acceptor) is an active-site residue. Residues N277 and D286 each contribute to the Mg(2+) site. D286 contacts ATP.

It belongs to the SELO family. Requires Mg(2+) as cofactor. The cofactor is Mn(2+).

The enzyme catalyses L-seryl-[protein] + ATP = 3-O-(5'-adenylyl)-L-seryl-[protein] + diphosphate. The catalysed reaction is L-threonyl-[protein] + ATP = 3-O-(5'-adenylyl)-L-threonyl-[protein] + diphosphate. It catalyses the reaction L-tyrosyl-[protein] + ATP = O-(5'-adenylyl)-L-tyrosyl-[protein] + diphosphate. It carries out the reaction L-histidyl-[protein] + UTP = N(tele)-(5'-uridylyl)-L-histidyl-[protein] + diphosphate. The enzyme catalyses L-seryl-[protein] + UTP = O-(5'-uridylyl)-L-seryl-[protein] + diphosphate. The catalysed reaction is L-tyrosyl-[protein] + UTP = O-(5'-uridylyl)-L-tyrosyl-[protein] + diphosphate. Nucleotidyltransferase involved in the post-translational modification of proteins. It can catalyze the addition of adenosine monophosphate (AMP) or uridine monophosphate (UMP) to a protein, resulting in modifications known as AMPylation and UMPylation. The sequence is that of Protein nucleotidyltransferase YdiU from Rhodococcus jostii (strain RHA1).